The primary structure comprises 1693 residues: Non-structural polyprotein pORF1 (1693 aa).

The Alphavirus-like MT domain occupies 56–240; sequence VFRPEVFWNH…HDVSNLRSWI (185 aa). Residues 60–240 are methyltransferase; sequence EVFWNHPIQR…HDVSNLRSWI (181 aa). Residues 241-439 are Y-domain; that stretch reads RTTKVTGDHP…FYAQCRRWLS (199 aa). A disulfide bridge links C434 with C481. Positions 442-509 are putative protease; that stretch reads FHLDPRVLVF…EAYEGSDVDP (68 aa). A zinc-binding region spans residues 510 to 691; that stretch reads AESAISDISG…FSPGHVWESA (182 aa). 3 residues coordinate Zn(2+): H671, E673, and H686. The segment at 712 to 778 is hinge; it reads SSPARPDLGF…AITHQTARHR (67 aa). The segment at 732–768 is disordered; it reads ATPTLAAPLPPPAPDPSPPPSAPALAEPASGATAGAP. Positions 739–753 are enriched in pro residues; that stretch reads PLPPPAPDPSPPPSA. Residues 754 to 768 are compositionally biased toward low complexity; the sequence is PALAEPASGATAGAP. Positions 775–921 constitute a Macro domain; that stretch reads ARHRRLLFTY…LYLPELAARW (147 aa). An X-domain region spans residues 785 to 942; it reads PDGSKVFAGS…TITEDVARTA (158 aa). The region spanning 934–1082 is the (+)RNA virus helicase ATP-binding domain; it reads ITEDVARTAN…RPDLGPTSWW (149 aa). The NTPase/helicase stretch occupies residues 960-1204; sequence GCRVTPGVVQ…ISDAIVNNFF (245 aa). 975–982 provides a ligand contact to ATP; the sequence is GVPGSGKS. Residues 1083-1216 form the (+)RNA virus helicase C-terminal domain; the sequence is HVTHRWPADV…GGEIGHQRPS (134 aa). The segment at 1207–1693 is RNA-directed RNA polymerase; the sequence is GGEIGHQRPS…LTNSILCRVE (487 aa). A RdRp catalytic domain is found at 1454-1565; it reads SMVFENDFSE…LCSEYRQSPG (112 aa).

The protein belongs to the hepevirus non-structural polyprotein family. In terms of assembly, the protease domain interacts with host EIF2AK4 (via C-terminus); this interaction inhibits dimerization of EIF2AK4 and prevents EIF2AK4-mediated phosphorylation of host EIF2A. Mg(2+) serves as cofactor. Post-translationally, ORF1 polyprotein does not seem to be processed into distinct enzymatic domains by a viral protease belonging to ORF1, but could be processed by a host serine protease like thrombin.

It is found in the host cytoplasm. It localises to the host perinuclear region. It carries out the reaction RNA(n) + a ribonucleoside 5'-triphosphate = RNA(n+1) + diphosphate. It catalyses the reaction GTP + S-adenosyl-L-methionine = N(7)-methyl-GTP + S-adenosyl-L-homocysteine. With respect to regulation, putative protease: Inhibited by chymostatin. Functionally, methyltransferase: Displays a capping enzyme activity. This function is necessary since all viral RNAs are synthesized in the cytoplasm, and host capping enzymes are restricted to the nucleus. The enzymatic reaction involves a covalent link between 7-methyl-GMP and the methyltransferase, whereas eukaryotic capping enzymes form a covalent complex only with GMP. Methyltransferase catalyzes transfer of a methyl group from S-adenosylmethionine to GTP and GDP to yield m(7)GTP or m(7)GDP. GDP is a better substrate than GTP. This enzyme also displays guanylyltransferase activity to form a covalent complex, methyltransferase-m(7)GMP, from which 7-methyl-GMP is transferred to the mRNA to create the cap structure. Its function is as follows. Y-domain: Indispensable for virus replication. In terms of biological role, putative protease: The putative protease domain although necessary for replication of the virus may not be a protease but rather a structural Zn(2+)-binding domain. Inhibits induction of IFN-beta by MDA5 and RIG-I pathways and down-regulates the expression of MDA5. NTPase/helicase: Multi-functional protein that exhibits NTPase and RNA unwinding activities. Hydrolyzes all NTPs efficiently and unwinds RNA duplexes containing 5' overhangs. Possesses a sequence independent RNA-5'-triphosphatase (RTPase) activity suggestive of its role in forming viral cap structure. Also participates in viral genome replication, RNA translocation and genome packaging/unpackaging. Functionally, RNA-directed RNA polymerase: Plays an essential role in the virus replication. Binds to the 3'-end of the genomic RNA to initiate viral replication. The protein is Non-structural polyprotein pORF1 of Homo sapiens (Human).